A 180-amino-acid chain; its full sequence is Crossover junction endodeoxyribonuclease RuvC (180 aa).

Catalysis depends on residues Asp7, Glu66, and Asp138. Asp7, Glu66, and Asp138 together coordinate Mg(2+).

It belongs to the RuvC family. In terms of assembly, homodimer which binds Holliday junction (HJ) DNA. The HJ becomes 2-fold symmetrical on binding to RuvC with unstacked arms; it has a different conformation from HJ DNA in complex with RuvA. In the full resolvosome a probable DNA-RuvA(4)-RuvB(12)-RuvC(2) complex forms which resolves the HJ. Mg(2+) serves as cofactor.

The protein resides in the cytoplasm. The catalysed reaction is Endonucleolytic cleavage at a junction such as a reciprocal single-stranded crossover between two homologous DNA duplexes (Holliday junction).. The RuvA-RuvB-RuvC complex processes Holliday junction (HJ) DNA during genetic recombination and DNA repair. Endonuclease that resolves HJ intermediates. Cleaves cruciform DNA by making single-stranded nicks across the HJ at symmetrical positions within the homologous arms, yielding a 5'-phosphate and a 3'-hydroxyl group; requires a central core of homology in the junction. The consensus cleavage sequence is 5'-(A/T)TT(C/G)-3'. Cleavage occurs on the 3'-side of the TT dinucleotide at the point of strand exchange. HJ branch migration catalyzed by RuvA-RuvB allows RuvC to scan DNA until it finds its consensus sequence, where it cleaves and resolves the cruciform DNA. The sequence is that of Crossover junction endodeoxyribonuclease RuvC from Burkholderia orbicola (strain AU 1054).